The primary structure comprises 72 residues: UPF0154 protein Bcer98_2334 (72 aa).

The chain crosses the membrane as a helical span at residues 3-23; the sequence is IWSGILVGVVALLAGVALGFF.

The protein belongs to the UPF0154 family.

Its subcellular location is the cell membrane. The polypeptide is UPF0154 protein Bcer98_2334 (Bacillus cytotoxicus (strain DSM 22905 / CIP 110041 / 391-98 / NVH 391-98)).